Consider the following 243-residue polypeptide: Adenylate dimethylallyltransferase (243 aa).

The protein belongs to the isopentenyl transferase family.

It catalyses the reaction dimethylallyl diphosphate + AMP = N(6)-(dimethylallyl)adenosine 5'-phosphate + diphosphate. Functionally, transfers dimethylallyl groups to AMP as part of the biosynthesis of cytokinin phytohormones. The chain is Adenylate dimethylallyltransferase (tzs) from Rhizobium rhizogenes (Agrobacterium rhizogenes).